The chain runs to 263 residues: Endonuclease 8 (263 aa).

Residue proline 2 is the Schiff-base intermediate with DNA of the active site. Glutamate 3 acts as the Proton donor in catalysis. The active-site Proton donor; for beta-elimination activity is the lysine 53. DNA contacts are provided by glutamine 70, arginine 125, and asparagine 169. The segment at 229 to 263 adopts an FPG-type zinc-finger fold; sequence KVFHRDGEACERCGGIIEKTTLSSRPFYWCPHCQK. The active-site Proton donor; for delta-elimination activity is the arginine 253.

Belongs to the FPG family. The cofactor is Zn(2+).

It catalyses the reaction 2'-deoxyribonucleotide-(2'-deoxyribose 5'-phosphate)-2'-deoxyribonucleotide-DNA = a 3'-end 2'-deoxyribonucleotide-(2,3-dehydro-2,3-deoxyribose 5'-phosphate)-DNA + a 5'-end 5'-phospho-2'-deoxyribonucleoside-DNA + H(+). Involved in base excision repair of DNA damaged by oxidation or by mutagenic agents. Acts as a DNA glycosylase that recognizes and removes damaged bases. Has a preference for oxidized pyrimidines, such as thymine glycol, 5,6-dihydrouracil and 5,6-dihydrothymine. Has AP (apurinic/apyrimidinic) lyase activity and introduces nicks in the DNA strand. Cleaves the DNA backbone by beta-delta elimination to generate a single-strand break at the site of the removed base with both 3'- and 5'-phosphates. This chain is Endonuclease 8, found in Salmonella schwarzengrund (strain CVM19633).